Consider the following 540-residue polypeptide: Type II methyltransferase M.AccI (540 aa).

The protein belongs to the N(4)/N(6)-methyltransferase family. In terms of assembly, monomer.

The catalysed reaction is a 2'-deoxyadenosine in DNA + S-adenosyl-L-methionine = an N(6)-methyl-2'-deoxyadenosine in DNA + S-adenosyl-L-homocysteine + H(+). Functionally, a gamma subtype methylase, recognizes the double-stranded sequence 5'-GTMKAC-3', methylates A-5 on both strands, and protects the DNA from cleavage by the AccI endonuclease. This chain is Type II methyltransferase M.AccI (accIM), found in Acinetobacter calcoaceticus.